The primary structure comprises 1381 residues: DNA-directed RNA polymerase subunit beta (1381 aa).

The protein belongs to the RNA polymerase beta chain family. As to quaternary structure, the RNAP catalytic core consists of 2 alpha, 1 beta, 1 beta' and 1 omega subunit. When a sigma factor is associated with the core the holoenzyme is formed, which can initiate transcription.

It catalyses the reaction RNA(n) + a ribonucleoside 5'-triphosphate = RNA(n+1) + diphosphate. Its function is as follows. DNA-dependent RNA polymerase catalyzes the transcription of DNA into RNA using the four ribonucleoside triphosphates as substrates. The chain is DNA-directed RNA polymerase subunit beta from Sulfurimonas denitrificans (strain ATCC 33889 / DSM 1251) (Thiomicrospira denitrificans (strain ATCC 33889 / DSM 1251)).